A 1036-amino-acid chain; its full sequence is Protein smoothened (1036 aa).

An N-terminal signal peptide occupies residues M1–A31. The Extracellular portion of the chain corresponds to S32–L258. N-linked (GlcNAc...) asparagine glycosylation is found at N55 and N95. The 122-residue stretch at V85–G206 folds into the FZ domain. 4 disulfide bridges follow: C90–C155, C100–C148, C139–C179, and C172–C194. Residues N184, N195, and N213 are each glycosylated (N-linked (GlcNAc...) asparagine). 2 disulfide bridges follow: C218/C238 and C242/C320. The chain crosses the membrane as a helical span at residues I259 to I279. Residues D280–Y287 lie on the Cytoplasmic side of the membrane. Residues P288–L308 traverse the membrane as a helical segment. The Extracellular portion of the chain corresponds to Q309–C339. N-linked (GlcNAc...) asparagine glycosylation is present at N336. A disulfide bridge links C339 with C413. Residues I340–L360 traverse the membrane as a helical segment. Over T361–S381 the chain is Cytoplasmic. Residues Y382–S402 traverse the membrane as a helical segment. At E403–S421 the chain is on the extracellular side. Residue N419 is glycosylated (N-linked (GlcNAc...) asparagine). The chain crosses the membrane as a helical span at residues M422–I442. Topologically, residues T443–H469 are cytoplasmic. A helical membrane pass occupies residues L470 to I490. The Extracellular portion of the chain corresponds to A491–S532. Residues C513 and C525 are joined by a disulfide bond. A helical membrane pass occupies residues V533–W553. At C554 to K1036 the chain is on the cytoplasmic side. S658, S659, S667, S670, S673, S687, S690, and S693 each carry phosphoserine. 2 disordered regions span residues H678–E745 and I870–A902. The segment covering R880–K899 has biased composition (basic residues).

It belongs to the G-protein coupled receptor Fz/Smo family. As to quaternary structure, interacts with cos. In terms of processing, phosphorylation by CkIalpha and PKA regulates smo accumulation at the cell surface and its signaling activity in response to hh. Expressed in olfactory sensory neurons (at protein level).

Its subcellular location is the cell membrane. The protein localises to the cell projection. It is found in the cilium. Functionally, segment polarity protein required for correct patterning of every segment. G protein-coupled receptor which associates with the patched protein (ptc) to transduce the hedgehog (hh) signal through the activation of an inhibitory G-protein. In the absence of hh, ptc represses the constitutive signaling activity of smo through fused (fu). Essential component of a hh-signaling pathway which regulates the Duox-dependent gut immune response to bacterial uracil; required to activate Cad99C-dependent endosome formation, norpA-dependent Ca2+ mobilization and p38 MAPK, which are essential steps in the Duox-dependent production of reactive oxygen species (ROS) in response to intestinal bacterial infection. This is Protein smoothened (smo) from Drosophila melanogaster (Fruit fly).